Reading from the N-terminus, the 178-residue chain is Redox-sensing transcriptional repressor Rex (178 aa).

59-64 (GVGNMG) provides a ligand contact to NAD(+).

This sequence belongs to the transcriptional regulatory Rex family. In terms of assembly, homodimer.

It localises to the cytoplasm. Functionally, modulates transcription in response to changes in cellular NADH/NAD(+) redox state. This Streptococcus suis protein is Redox-sensing transcriptional repressor Rex.